The chain runs to 681 residues: Nucleolar GTP-binding protein 1 (681 aa).

In terms of domain architecture, OBG-type G spans 170–341 (RTLILCGFPN…LRDRACDELL (172 aa)). Residues 176-183 (GFPNVGKS), 222-226 (DTPGI), and 290-293 (NKVD) contribute to the GTP site.

It belongs to the TRAFAC class OBG-HflX-like GTPase superfamily. OBG GTPase family. NOG subfamily. As to expression, ubiquitously expressed.

Its subcellular location is the nucleus. The protein resides in the nucleolus. Involved in the biogenesis of the 60S ribosomal subunit. Has a role in regulating longevity, growth and brood size. May regulate fat storage via the insulin/IGF pathway. This is Nucleolar GTP-binding protein 1 from Caenorhabditis elegans.